An 880-amino-acid polypeptide reads, in one-letter code: Nonsense-mediated mRNA decay factor SMG7-like (880 aa).

TPR repeat units lie at residues 149–183 (QEQY…NPHN) and 184–217 (QLAV…GASN). The interval 669-711 (RLGLSKPNGLGPIDETGPVSAFDSLSINSSTEHPASSYSPPTP) is disordered. Polar residues predominate over residues 691–701 (DSLSINSSTEH).

In terms of biological role, may play a role in growth and development. The sequence is that of Nonsense-mediated mRNA decay factor SMG7-like from Arabidopsis thaliana (Mouse-ear cress).